The primary structure comprises 537 residues: MMASTTSATAAGGAFAAAKTRAGSSAAGGGACARVAAGGRRRSGVVVRCDAGVEAQAQAQAVAKAASVAALEQFKISADRYMKERSSIAVIGLSVHTAPVEMREKLAVAEELWPRAISELTSLNHIEEAAVLSTCNRMEIYVVALSWNRGIREVVDWMSKKSGIPASELREHLFMLRDSDATRHLFEVSAGLDSLVLGEGQILAQVKQVVRSGQNSGGLGKNIDRMFKDAITAGKRVRCETNISSGAVSVSSAAVELALMKLPKSECLSARMLLIGAGKMGKLVVKHLIAKGCKKVVVVNRSVERVDAIREEMKDIEIVYRPLTEMYEAAAEADVVFTSTASETPLFTKEHAEALPAISDAMGGVRLFVDISVPRNVSACVSEVGHARVYNVDDLKEVVEANKEDRLRKAMEAQTIITQELKRFEAWRDSLETVPTIKKLRSYADRIRASELEKCLQKIGEDALTKKMRRSIEELSTGIVNKLLHGPLQHLRCDGSDSRTLDETLENMHALNRMFSLDTEKAIIEQKIKAKVEKSQN.

A chloroplast-targeting transit peptide spans 1-48 (MMASTTSATAAGGAFAAAKTRAGSSAAGGGACARVAAGGRRRSGVVVR). Residues 134–137 (TCNR), serine 194, 199–201 (EGQ), and glutamine 205 each bind substrate. Cysteine 135 serves as the catalytic Nucleophile. NADP(+) is bound at residue 276 to 281 (GAGKMG).

This sequence belongs to the glutamyl-tRNA reductase family.

The protein resides in the plastid. Its subcellular location is the chloroplast. It catalyses the reaction (S)-4-amino-5-oxopentanoate + tRNA(Glu) + NADP(+) = L-glutamyl-tRNA(Glu) + NADPH + H(+). The protein operates within porphyrin-containing compound metabolism; protoporphyrin-IX biosynthesis; 5-aminolevulinate from L-glutamyl-tRNA(Glu): step 1/2. In terms of biological role, catalyzes the NADPH-dependent reduction of glutamyl-tRNA(Glu) to glutamate 1-semialdehyde (GSA). In Oryza sativa subsp. japonica (Rice), this protein is Glutamyl-tRNA reductase, chloroplastic.